We begin with the raw amino-acid sequence, 363 residues long: Cobalt-precorrin-5B C(1)-methyltransferase (363 aa).

This sequence belongs to the CbiD family.

It carries out the reaction Co-precorrin-5B + S-adenosyl-L-methionine = Co-precorrin-6A + S-adenosyl-L-homocysteine. It functions in the pathway cofactor biosynthesis; adenosylcobalamin biosynthesis; cob(II)yrinate a,c-diamide from sirohydrochlorin (anaerobic route): step 6/10. Catalyzes the methylation of C-1 in cobalt-precorrin-5B to form cobalt-precorrin-6A. The chain is Cobalt-precorrin-5B C(1)-methyltransferase from Treponema denticola (strain ATCC 35405 / DSM 14222 / CIP 103919 / JCM 8153 / KCTC 15104).